The primary structure comprises 236 residues: Phosphoribosylformylglycinamidine synthase subunit PurQ (236 aa).

Residues 3–234 (FGVIVFPGSN…VDWWERGERL (232 aa)) enclose the Glutamine amidotransferase type-1 domain. The active-site Nucleophile is Cys-86. Active-site residues include His-203 and Glu-205.

In terms of assembly, part of the FGAM synthase complex composed of 1 PurL, 1 PurQ and 2 PurS subunits.

It is found in the cytoplasm. It catalyses the reaction N(2)-formyl-N(1)-(5-phospho-beta-D-ribosyl)glycinamide + L-glutamine + ATP + H2O = 2-formamido-N(1)-(5-O-phospho-beta-D-ribosyl)acetamidine + L-glutamate + ADP + phosphate + H(+). It carries out the reaction L-glutamine + H2O = L-glutamate + NH4(+). The protein operates within purine metabolism; IMP biosynthesis via de novo pathway; 5-amino-1-(5-phospho-D-ribosyl)imidazole from N(2)-formyl-N(1)-(5-phospho-D-ribosyl)glycinamide: step 1/2. In terms of biological role, part of the phosphoribosylformylglycinamidine synthase complex involved in the purines biosynthetic pathway. Catalyzes the ATP-dependent conversion of formylglycinamide ribonucleotide (FGAR) and glutamine to yield formylglycinamidine ribonucleotide (FGAM) and glutamate. The FGAM synthase complex is composed of three subunits. PurQ produces an ammonia molecule by converting glutamine to glutamate. PurL transfers the ammonia molecule to FGAR to form FGAM in an ATP-dependent manner. PurS interacts with PurQ and PurL and is thought to assist in the transfer of the ammonia molecule from PurQ to PurL. This Moorella thermoacetica (strain ATCC 39073 / JCM 9320) protein is Phosphoribosylformylglycinamidine synthase subunit PurQ.